We begin with the raw amino-acid sequence, 414 residues long: NAD-specific glutamate dehydrogenase (414 aa).

Residues lysine 70 and lysine 94 each coordinate substrate. Catalysis depends on lysine 106, which acts as the Proton donor. NAD(+) contacts are provided by threonine 190 and asparagine 221. Position 348 (serine 348) interacts with substrate.

This sequence belongs to the Glu/Leu/Phe/Val dehydrogenases family. As to quaternary structure, homohexamer.

The catalysed reaction is L-glutamate + NAD(+) + H2O = 2-oxoglutarate + NH4(+) + NADH + H(+). This Staphylococcus aureus (strain COL) protein is NAD-specific glutamate dehydrogenase (gluD).